The chain runs to 947 residues: Serine-aspartate repeat-containing protein C (947 aa).

The first 50 residues, 1–50 (MNNKKTATNRKGMIPNRLNKFSIRKYSVGTASILVGTTLIFGLSGHEAKA), serve as a signal peptide directing secretion. Residues 21–32 (FSIRKYSVGTAS) carry the YSIRK-G/S signaling motif motif. The interval 51-164 (AEHTNGELNQ…STTPKTTTIK (114 aa)) is disordered. The segment at 51–495 (AEHTNGELNQ…GSSTANGDQK (445 aa)) is ligand binding A region. Polar residues predominate over residues 56 to 71 (GELNQSKNETTAPSEN). Positions 72-83 (KTTKKVDSRQLK) are enriched in basic and acidic residues. Residues 84–155 (DNTQTATADQ…SNLTQAKDVS (72 aa)) show a composition bias toward polar residues. CNA-B domains follow at residues 496–606 (KYNL…YKTP) and 607–717 (KYSL…EEET). The disordered stretch occupies residues 678 to 927 (TQTGTNTTED…NNSNNGTLFG (250 aa)). Acidic residues-rich tracts occupy residues 685-695 (TEDDKDADGGE) and 712-886 (YYEE…DSDS). The LPXTG sorting signal motif lies at 910–914 (LPETG). A compositionally biased stretch (low complexity) spans 912-927 (ETGSENNNSNNGTLFG). The residue at position 913 (T913) is a Pentaglycyl murein peptidoglycan amidated threonine. Positions 914-947 (GSENNNSNNGTLFGGLFAALGSLLLFGRRKKQNK) are cleaved as a propeptide — removed by sortase.

Belongs to the serine-aspartate repeat-containing protein (SDr) family. In terms of assembly, homodimerizes; via N2-Domain. Interacts with host NRXN1; this interaction mediates bacterial attachment to host cells.

Its subcellular location is the secreted. The protein localises to the cell wall. Its function is as follows. Cell surface-associated calcium-binding protein which plays an important role in adhesion and pathogenesis. Mediates interactions with components of the extracellular matrix such as host NRXN1 to promote bacterial adhesion. The chain is Serine-aspartate repeat-containing protein C (sdrC) from Staphylococcus aureus (strain Newman).